The chain runs to 88 residues: uncharacterized protein (88 aa).

This is an uncharacterized protein from Sulfolobus islandicus filamentous virus (isolate Iceland/Hveragerdi) (SIFV).